Reading from the N-terminus, the 169-residue chain is Ribosome maturation factor RimM (169 aa).

In terms of domain architecture, PRC barrel spans 97–169; that stretch reads EDEVYFKDLI…KIVVDWEYDY (73 aa).

It belongs to the RimM family. Binds ribosomal protein uS19.

The protein localises to the cytoplasm. Its function is as follows. An accessory protein needed during the final step in the assembly of 30S ribosomal subunit, possibly for assembly of the head region. Essential for efficient processing of 16S rRNA. May be needed both before and after RbfA during the maturation of 16S rRNA. It has affinity for free ribosomal 30S subunits but not for 70S ribosomes. This Francisella tularensis subsp. tularensis (strain FSC 198) protein is Ribosome maturation factor RimM.